A 948-amino-acid chain; its full sequence is Isoleucine--tRNA ligase (948 aa).

The short motif at 58-68 (PYANGDIHIGH) is the 'HIGH' region element. Glu-566 serves as a coordination point for L-isoleucyl-5'-AMP. The short motif at 607-611 (KMSKS) is the 'KMSKS' region element. Lys-610 contributes to the ATP binding site. Zn(2+) contacts are provided by Cys-911, Cys-914, Cys-931, and Cys-934.

The protein belongs to the class-I aminoacyl-tRNA synthetase family. IleS type 1 subfamily. In terms of assembly, monomer. It depends on Zn(2+) as a cofactor.

The protein localises to the cytoplasm. The enzyme catalyses tRNA(Ile) + L-isoleucine + ATP = L-isoleucyl-tRNA(Ile) + AMP + diphosphate. Its function is as follows. Catalyzes the attachment of isoleucine to tRNA(Ile). As IleRS can inadvertently accommodate and process structurally similar amino acids such as valine, to avoid such errors it has two additional distinct tRNA(Ile)-dependent editing activities. One activity is designated as 'pretransfer' editing and involves the hydrolysis of activated Val-AMP. The other activity is designated 'posttransfer' editing and involves deacylation of mischarged Val-tRNA(Ile). The chain is Isoleucine--tRNA ligase from Vibrio vulnificus (strain YJ016).